A 101-amino-acid polypeptide reads, in one-letter code: Thrombin-like enzyme okinaxobin-1 (101 aa).

The first 16 residues, 1-16, serve as a signal peptide directing secretion; it reads LIRVLANLLILQLSYA. The propeptide occupies 17-22; sequence QKSSEL. Residues 23–101 enclose the Peptidase S1 domain; that stretch reads VIGGDECNIN…PKKKYFFRCR (79 aa). The cysteines at positions 50 and 66 are disulfide-linked. The Charge relay system role is filled by H65.

This sequence belongs to the peptidase S1 family. Snake venom subfamily. As to quaternary structure, monomer. Post-translationally, glycosylated. Expressed by the venom gland.

It is found in the secreted. Its activity is regulated as follows. Strongly inactivated by diisopropylfluorophosphate (DFP) and phenylmethanesulfonyl fluoride (PMSF), and to a lesser extent by tosyl-L-lysine chloromethyl ketone (TLCK). Thrombin-like snake venom serine protease that releases specifically fibrinopeptide B from fibrinogen (FGB) to form fibrin clots. Shows a preferential cleavage at Arg-|-Gly bonds in fibrinogen beta chains. Cleaves fibrinogen beta chains preferentially to alpha chains. This Ovophis okinavensis (Ryukyu Island pit viper) protein is Thrombin-like enzyme okinaxobin-1.